The sequence spans 168 residues: Protein-export protein SecB (168 aa).

It belongs to the SecB family. As to quaternary structure, homotetramer, a dimer of dimers. One homotetramer interacts with 1 SecA dimer.

The protein resides in the cytoplasm. One of the proteins required for the normal export of preproteins out of the cell cytoplasm. It is a molecular chaperone that binds to a subset of precursor proteins, maintaining them in a translocation-competent state. It also specifically binds to its receptor SecA. The polypeptide is Protein-export protein SecB (Rhizobium meliloti (strain 1021) (Ensifer meliloti)).